Reading from the N-terminus, the 201-residue chain is Large ribosomal subunit protein uL4 (201 aa).

Residues 43–73 (SRGQKTRAEVTGSGKKPWRQKGTGRARSGSV) are disordered.

The protein belongs to the universal ribosomal protein uL4 family. Part of the 50S ribosomal subunit.

In terms of biological role, one of the primary rRNA binding proteins, this protein initially binds near the 5'-end of the 23S rRNA. It is important during the early stages of 50S assembly. It makes multiple contacts with different domains of the 23S rRNA in the assembled 50S subunit and ribosome. Functionally, forms part of the polypeptide exit tunnel. This is Large ribosomal subunit protein uL4 from Sodalis glossinidius (strain morsitans).